A 270-amino-acid polypeptide reads, in one-letter code: MSVEQSLLGKETQYPTSYQPDVLFPIARAQSREKYAHIEGITQGKDWWHVFEISWLNAHGIPQVAIGRITLPASSPNLIESKSLKLYFNSLNFTQFDSTQSFIETVEKDLSAAAGAKVELTLFQVDDLEISKPQGICIDDLMPERLEQHPDATLLKLDESDEEIEVELYSHLLRSNCPVTGQPDWGTVFIRFKGKKPCYRSILAYIISYRQHNGFHEQCVEQIFADIWQNLQPEKLMVYATYTRRGGLDINPCRVSDLTWMPKPIRLARQ.

79-81 (IES) contributes to the substrate binding site. 81 to 82 (SK) serves as a coordination point for NADPH. The active-site Thioimide intermediate is Cys177. The Proton donor role is filled by Asp184. 216-217 (HE) provides a ligand contact to substrate. 245-246 (RG) contacts NADPH.

Belongs to the GTP cyclohydrolase I family. QueF type 2 subfamily. As to quaternary structure, homodimer.

The protein resides in the cytoplasm. The catalysed reaction is 7-aminomethyl-7-carbaguanine + 2 NADP(+) = 7-cyano-7-deazaguanine + 2 NADPH + 3 H(+). It participates in tRNA modification; tRNA-queuosine biosynthesis. Its function is as follows. Catalyzes the NADPH-dependent reduction of 7-cyano-7-deazaguanine (preQ0) to 7-aminomethyl-7-deazaguanine (preQ1). This Acinetobacter baumannii (strain ATCC 17978 / DSM 105126 / CIP 53.77 / LMG 1025 / NCDC KC755 / 5377) protein is NADPH-dependent 7-cyano-7-deazaguanine reductase.